The following is a 212-amino-acid chain: MPGYVLTYFPVRGRAEPIRLLLADQGISWKEDEVQIPDWFSGKDARKKEAVFGQLPQFQDGDYVLYQSNSILRYLGNKHGLTGANDEERGHIDMVNDGVEDLRQKYGRLIFFEYETGKDKYLKELPSQLDFFERILSKNANGSKFVVGQKISFADYNLLDILQCHLDLCSKSLSAYPLLTAYVERLVARPKISEYLKSDARNKRPITPKHKK.

The GST N-terminal domain maps to 2–83 (PGYVLTYFPV…YLGNKHGLTG (82 aa)). Glutathione contacts are provided by residues Tyr8, Arg14, Trp39, Lys47, 54–55 (QL), and 67–68 (QS). Residues 85–206 (NDEERGHIDM…KSDARNKRPI (122 aa)) form the GST C-terminal domain.

This sequence belongs to the GST superfamily. Pi family. Homodimer. In terms of tissue distribution, expressed only in embryos. Not expressed in liver, lung, heart, kidney and ovary.

It localises to the cytoplasm. Its subcellular location is the mitochondrion. The protein resides in the nucleus. The enzyme catalyses RX + glutathione = an S-substituted glutathione + a halide anion + H(+). In terms of biological role, conjugation of reduced glutathione to a wide number of exogenous and endogenous hydrophobic electrophiles. Highly active towards 1-chloro-2,4-dinitrobenzene and organic isothiocyanates, but shows no detectable activity towards 1,2-dichloro-4-nitrobenzene, p-nitrobenzylchloride, trans-4-phenyl-3-buten-2-one (tPBO) and ethacrynic acid. May be associated with cellular proliferation. The sequence is that of Glutathione S-transferase P 1 (gstp1) from Xenopus laevis (African clawed frog).